The chain runs to 336 residues: Phospholipase A1 (336 aa).

Positions 1–27 (MEENMNLKYLLLFVYFVQVLNCCYGHG) are cleaved as a signal peptide. Positions 28–36 (DPLSYELDR) are excised as a propeptide. Residues C40 and C123 are joined by a disulfide bond. S173 functions as the Nucleophile in the catalytic mechanism. Catalysis depends on D201, which acts as the Charge relay system. 2 disulfide bridges follow: C212/C217 and C255/C263. H265 serves as the catalytic Charge relay system. 3 cysteine pairs are disulfide-bonded: C280–C304, C281–C329, and C297–C302.

This sequence belongs to the AB hydrolase superfamily. Lipase family. As to expression, expressed by the venom gland.

The protein localises to the secreted. The catalysed reaction is a 1,2-diacyl-sn-glycero-3-phosphocholine + H2O = a 2-acyl-sn-glycero-3-phosphocholine + a fatty acid + H(+). In terms of biological role, catalyzes the hydrolysis of phosphatidylcholine with phospholipase A1 activity. Induces hemolytic activity. Acts as an allergen. This chain is Phospholipase A1, found in Vespula vulgaris (Yellow jacket).